The primary structure comprises 488 residues: Beta-1,3-glucan-binding protein (488 aa).

The N-terminal stretch at 1–17 (MFVTFICFLACLTCSYG) is a signal peptide. The segment at 18–135 (QPRAQQYVVP…GTPADTSLEP (118 aa)) is binds to curdlan, laminarihexaose and laminarin. The complex formation with laminarin induces self-association of the complexes into a macro structure, likely containing six protein and three laminarin molecules. The macro structures may form a platform on a microbial surface for recruitment of downstream proteases, as a means of amplification of the initial signal of pathogen recognition for the activation of the phenoloxidase cascade. The tract at residues 18–198 (QPRAQQYVVP…LKDLANWEAE (181 aa)) is binds to curdlan, lipopolysaccharide and lipoteichoic acid, activates the phenoloxidase cascade and is resistant to proteolytic degradation by trypsin or chymotrypsin, but is not as effective as the full-length protein in aggregation of microorganisms. The region spanning 24–123 (YVVPSAKLEA…GEWTVTEFVN (100 aa)) is the CBM39 domain. Residues 24–127 (YVVPSAKLEA…VTEFVNEDGT (104 aa)) form a binds to laminarihexaose and laminarin region. Substrate-binding positions include Asp72, 99 to 101 (WTY), and Arg110. The tract at residues 125 to 158 (DGTPADTSLEPTTAPTPVRPDQPNQPIPTHRPDP) is disordered. Residues 129-139 (ADTSLEPTTAP) show a composition bias toward polar residues. Over residues 141 to 150 (PVRPDQPNQP) the composition is skewed to pro residues. A GH16 domain is found at 144–488 (PDQPNQPIPT…KVDYVRVYAL (345 aa)). Positions 199-488 (VKFPEEPDYP…KVDYVRVYAL (290 aa)) are binds to laminarin, but not to curdlan, does not activate the phenoloxidase cascade, is susceptible to proteinase digestion by trypsin or chymotrypsin and does not cause aggregation of microorganisms. Residues Asn373 and Asn453 are each glycosylated (N-linked (GlcNAc...) asparagine).

This sequence belongs to the insect beta-1,3-glucan binding protein family. As to quaternary structure, monomer. Post-translationally, the N-terminus is blocked. As to expression, fat body and hemolymph.

It is found in the secreted. In terms of biological role, involved in the recognition of invading microorganisms causing their aggregation. Activates the phenoloxidase cascade. Binds specifically to beta-1,3-glucan. Binds to curdlan, a linear water-insoluble beta-1,3-glucan polysaccharide, and to laminarin, a water-soluble beta-1,3-glucan polysaccharide containing beta-1,6 branches. Also binds to lipopolysaccharide and lipoteichoic acid. This Plodia interpunctella (Indianmeal moth) protein is Beta-1,3-glucan-binding protein.